The following is a 475-amino-acid chain: tRNA modification GTPase MnmE (475 aa).

Positions 32, 97, and 136 each coordinate (6S)-5-formyl-5,6,7,8-tetrahydrofolate. The TrmE-type G domain occupies 232–396 (GVATVIAGRP…LKSRMSSMVE (165 aa)). GTP contacts are provided by residues 242 to 247 (NAGKST), 261 to 267 (SHMPGTT), 286 to 289 (DTAG), and 377 to 379 (SAR). Residues serine 246 and threonine 267 each contribute to the Mg(2+) site. Lysine 475 contacts (6S)-5-formyl-5,6,7,8-tetrahydrofolate.

Belongs to the TRAFAC class TrmE-Era-EngA-EngB-Septin-like GTPase superfamily. TrmE GTPase family. Homodimer. Heterotetramer of two MnmE and two MnmG subunits. The cofactor is K(+).

It is found in the cytoplasm. Exhibits a very high intrinsic GTPase hydrolysis rate. Involved in the addition of a carboxymethylaminomethyl (cmnm) group at the wobble position (U34) of certain tRNAs, forming tRNA-cmnm(5)s(2)U34. This chain is tRNA modification GTPase MnmE, found in Chlorobium phaeobacteroides (strain DSM 266 / SMG 266 / 2430).